We begin with the raw amino-acid sequence, 272 residues long: Dihydropteroate synthase (272 aa).

The 251-residue stretch at 1 to 251 folds into the Pterin-binding domain; the sequence is MIKTKIMGIL…GVRVHNVLLN (251 aa). Asparagine 11 serves as a coordination point for Mg(2+). (7,8-dihydropterin-6-yl)methyl diphosphate contacts are provided by residues threonine 51, aspartate 89, asparagine 108, aspartate 172, lysine 208, and 244 to 246; that span reads RVH.

The protein belongs to the DHPS family. As to quaternary structure, homodimer. The cofactor is Mg(2+).

The catalysed reaction is (7,8-dihydropterin-6-yl)methyl diphosphate + 4-aminobenzoate = 7,8-dihydropteroate + diphosphate. Its pathway is cofactor biosynthesis; tetrahydrofolate biosynthesis; 7,8-dihydrofolate from 2-amino-4-hydroxy-6-hydroxymethyl-7,8-dihydropteridine diphosphate and 4-aminobenzoate: step 1/2. Functionally, catalyzes the condensation of para-aminobenzoate (pABA) with 6-hydroxymethyl-7,8-dihydropterin diphosphate (DHPt-PP) to form 7,8-dihydropteroate (H2Pte), the immediate precursor of folate derivatives. The chain is Dihydropteroate synthase (folP) from Staphylococcus epidermidis (strain ATCC 35984 / DSM 28319 / BCRC 17069 / CCUG 31568 / BM 3577 / RP62A).